Reading from the N-terminus, the 609-residue chain is Pescadillo homolog (609 aa).

The BRCT domain occupies 320 to 413 (KLKNLFKGLK…KLLPTNKYFI (94 aa)). Disordered stretches follow at residues 443 to 462 (DEFEKQERAEGISDDEDEDF) and 488 to 609 (ALNS…EILA). 2 stretches are compositionally biased toward basic and acidic residues: residues 444 to 453 (EFEKQERAEG) and 488 to 498 (ALNSGEAKKEQ). A coiled-coil region spans residues 481–509 (FREEKAEALNSGEAKKEQAEEDNEDDDQE). The span at 499 to 512 (AEEDNEDDDQEPDQ) shows a compositional bias: acidic residues. Basic and acidic residues-rich tracts occupy residues 513–524 (DETKKQRSEKKQ) and 533–552 (VFKENPKEQKQLTKQEEALR). A coiled-coil region spans residues 539–607 (KEQKQLTKQE…QKRKAQRKEI (69 aa)). Residues 554 to 564 (KMVKSRHKKLY) show a composition bias toward basic residues. Basic and acidic residues predominate over residues 567–609 (LLDKQKKATKEANLLREKRQQIDKQKRKEQTQKRKAQRKEILA).

This sequence belongs to the pescadillo family.

It localises to the nucleus. The protein localises to the nucleolus. Its subcellular location is the nucleoplasm. In terms of biological role, required for maturation of ribosomal RNAs and formation of the large ribosomal subunit. In Aedes aegypti (Yellowfever mosquito), this protein is Pescadillo homolog.